Consider the following 229-residue polypeptide: Lipoprotein-releasing system ATP-binding protein LolD (229 aa).

Residues 7–229 (LQCINLTKSF…KNGQLFNNKN (223 aa)) form the ABC transporter domain. ATP is bound at residue 43 to 50 (GKSGSGKS).

The protein belongs to the ABC transporter superfamily. Lipoprotein translocase (TC 3.A.1.125) family. In terms of assembly, the complex is composed of two ATP-binding proteins (LolD) and two transmembrane proteins (LolC and LolE).

The protein resides in the cell inner membrane. In terms of biological role, part of the ABC transporter complex LolCDE involved in the translocation of mature outer membrane-directed lipoproteins, from the inner membrane to the periplasmic chaperone, LolA. Responsible for the formation of the LolA-lipoprotein complex in an ATP-dependent manner. This Buchnera aphidicola subsp. Schizaphis graminum (strain Sg) protein is Lipoprotein-releasing system ATP-binding protein LolD.